A 287-amino-acid chain; its full sequence is MILNKEKIKNYAAYLYIKVAYDQAHSKMAHTVYFTNFYRSSKPLFLDEEDPINPCFQTISMGGGYVSGEIYRSDFEINDDARCIITTQSSAKAYKTVDGKTSEQHTNITLGKNSILEYISDNVIVYEDGKFAQFNNFKMDSSATLIYTECFGPGWSPHGSAYQYEKMYLNTKIYYDDKLVLFDNLKFQPRKNDESAFGIMDGYHYCGTMIVINQQVIEDDVIKIRDLVKEKYPDMDMIFGVSRMDIPGLGLRVLANTYYHVEKINAVAHDYFRRKLFNKKPLILRKP.

The protein belongs to the UreD family. As to quaternary structure, ureD, UreF and UreG form a complex that acts as a GTP-hydrolysis-dependent molecular chaperone, activating the urease apoprotein by helping to assemble the nickel containing metallocenter of UreC. The UreE protein probably delivers the nickel.

The protein localises to the cytoplasm. Required for maturation of urease via the functional incorporation of the urease nickel metallocenter. This chain is Urease accessory protein UreD, found in Ureaplasma parvum serovar 3 (strain ATCC 27815 / 27 / NCTC 11736).